A 96-amino-acid polypeptide reads, in one-letter code: Acylphosphatase (96 aa).

Residues 4–91 (RVHVYVKGKV…GEFDDFRILY (88 aa)) form the Acylphosphatase-like domain. Catalysis depends on residues Arg-19 and Asn-37.

The protein belongs to the acylphosphatase family.

It carries out the reaction an acyl phosphate + H2O = a carboxylate + phosphate + H(+). This is Acylphosphatase (acyP) from Syntrophus aciditrophicus (strain SB).